The sequence spans 322 residues: Lipoyl synthase (322 aa).

Positions 1–12 (MVTVLNTVNQSG) are enriched in polar residues. The tract at residues 1-22 (MVTVLNTVNQSGRLRHPEKAHR) is disordered. Positions 60, 65, 71, 86, 90, 93, and 299 each coordinate [4Fe-4S] cluster. Residues 72 to 288 (WEKKHATFMI…ETIGKTKGFL (217 aa)) enclose the Radical SAM core domain.

Belongs to the radical SAM superfamily. Lipoyl synthase family. It depends on [4Fe-4S] cluster as a cofactor.

Its subcellular location is the cytoplasm. It catalyses the reaction [[Fe-S] cluster scaffold protein carrying a second [4Fe-4S](2+) cluster] + N(6)-octanoyl-L-lysyl-[protein] + 2 oxidized [2Fe-2S]-[ferredoxin] + 2 S-adenosyl-L-methionine + 4 H(+) = [[Fe-S] cluster scaffold protein] + N(6)-[(R)-dihydrolipoyl]-L-lysyl-[protein] + 4 Fe(3+) + 2 hydrogen sulfide + 2 5'-deoxyadenosine + 2 L-methionine + 2 reduced [2Fe-2S]-[ferredoxin]. Its pathway is protein modification; protein lipoylation via endogenous pathway; protein N(6)-(lipoyl)lysine from octanoyl-[acyl-carrier-protein]: step 2/2. Functionally, catalyzes the radical-mediated insertion of two sulfur atoms into the C-6 and C-8 positions of the octanoyl moiety bound to the lipoyl domains of lipoate-dependent enzymes, thereby converting the octanoylated domains into lipoylated derivatives. The chain is Lipoyl synthase from Brucella abortus (strain S19).